The chain runs to 322 residues: tRNA uridine(34) hydroxylase (322 aa).

The 95-residue stretch at 125–219 (QQEDTIVVDA…YGKDPEVQGE (95 aa)) folds into the Rhodanese domain. The Cysteine persulfide intermediate role is filled by cysteine 179.

Belongs to the TrhO family.

It catalyses the reaction uridine(34) in tRNA + AH2 + O2 = 5-hydroxyuridine(34) in tRNA + A + H2O. In terms of biological role, catalyzes oxygen-dependent 5-hydroxyuridine (ho5U) modification at position 34 in tRNAs. In Bacillus licheniformis (strain ATCC 14580 / DSM 13 / JCM 2505 / CCUG 7422 / NBRC 12200 / NCIMB 9375 / NCTC 10341 / NRRL NRS-1264 / Gibson 46), this protein is tRNA uridine(34) hydroxylase.